A 154-amino-acid chain; its full sequence is NADPH-dependent 7-cyano-7-deazaguanine reductase (154 aa).

Over residues 1 to 11 the composition is skewed to basic and acidic residues; sequence MAKKPVKDLKQ. Residues 1–31 form a disordered region; it reads MAKKPVKDLKQLGHATPVPASPEEATLERVP. Cys52 functions as the Thioimide intermediate in the catalytic mechanism. Asp59 acts as the Proton donor in catalysis. Substrate-binding positions include 74-76 and 93-94; these read IES and HE.

The protein belongs to the GTP cyclohydrolase I family. QueF type 1 subfamily.

The protein resides in the cytoplasm. It carries out the reaction 7-aminomethyl-7-carbaguanine + 2 NADP(+) = 7-cyano-7-deazaguanine + 2 NADPH + 3 H(+). It participates in tRNA modification; tRNA-queuosine biosynthesis. Functionally, catalyzes the NADPH-dependent reduction of 7-cyano-7-deazaguanine (preQ0) to 7-aminomethyl-7-deazaguanine (preQ1). The sequence is that of NADPH-dependent 7-cyano-7-deazaguanine reductase from Parvibaculum lavamentivorans (strain DS-1 / DSM 13023 / NCIMB 13966).